A 431-amino-acid polypeptide reads, in one-letter code: Ammonium transporter 3 (431 aa).

The Extracellular segment spans residues 1–27; that stretch reads MEQFSTSSSESSDSSSEYSLEFYMDTS. The chain crosses the membrane as a helical span at residues 28-48; sequence WVLDAANLVFFMQAGFGMLEA. The Cytoplasmic portion of the chain corresponds to 49–63; it reads GMVRAKNTKSILLKN. The helical transmembrane segment at 64-84 threads the bilayer; sequence LINTAICAISYYCVGHSFAYG. Residues 85–102 lie on the Extracellular side of the membrane; it reads KVNPNSFVGFGNFFLMDY. The chain crosses the membrane as a helical span at residues 103–125; it reads THYAYWMIQWAYAATATTIATGA. Topologically, residues 126–134 are cytoplasmic; the sequence is MAERLQLHC. The chain crosses the membrane as a helical span at residues 135–155; the sequence is YILFTLVQTILIYPFVAHWIW. Topologically, residues 156-160 are extracellular; it reads SQNGW. A helical membrane pass occupies residues 161 to 181; sequence LFDLGIVDFAGGAVIHIVAGI. At 182-211 the chain is on the cytoplasmic side; it reads TGACGSFLLGPRIGRFNQESGKPKNLPGHS. A helical membrane pass occupies residues 212–232; that stretch reads VVLMSLGAMILWYSWYGYTAG. Over 233 to 249 the chain is Extracellular; that stretch reads ASLGMTRSRVLPASRVS. The chain crosses the membrane as a helical span at residues 250–270; sequence VVVTLSGATGLITVLGIGKIF. The Cytoplasmic segment spans residues 271 to 300; sequence NGHYDLVKGINGLIAGLVSSTSSCAYIEPW. A helical membrane pass occupies residues 301 to 321; the sequence is AAIIIGFIGGIVYWFSSWALL. The Extracellular segment spans residues 322–333; sequence NWLRLDDPVDST. A helical transmembrane segment spans residues 334–354; sequence AIHLFGGCWSLISVAFFATHG. The Cytoplasmic segment spans residues 355–357; the sequence is RVR. A helical membrane pass occupies residues 358 to 378; sequence NPDIILPGGIFYGGGISLLWV. A topological domain (extracellular) is located at residue Gln379. Residues 380 to 400 traverse the membrane as a helical segment; the sequence is LVGMVLAILWAGFLSGIFFFT. Residues 401 to 431 are Cytoplasmic-facing; sequence MDYFGKLRVDVDTELAGLDNSNHGGSAYIFD.

Belongs to the ammonia transporter channel (TC 1.A.11.2) family.

Its subcellular location is the cell membrane. It is found in the endosome membrane. It localises to the cytoplasmic vesicle. The protein localises to the phagosome membrane. In terms of biological role, ammonium transporter that mediates the import of ammonium in prespore cells. Controls ammonium homeostasis during growth and development. Ammonium has been shown to function as a morphogen at multiple steps during the development. May function as an ammonia sensor that relays information concerning ammonia concentrations to the signaling pathway involved in the slug versus culmination choice and regulates prestalk gene expression. This Dictyostelium discoideum (Social amoeba) protein is Ammonium transporter 3 (amtC).